Reading from the N-terminus, the 569-residue chain is Neutral leucine aminopeptidase, chloroplastic (569 aa).

The transit peptide at 1–48 directs the protein to the chloroplast; sequence MNGVLCSSSSSFHSYPSIFTKFQSSPIWSFSISVTPLCSRRAKRMAHS. K339 and D344 together coordinate Mn(2+). Residue K351 is part of the active site. Mn(2+) contacts are provided by D364, D424, and E426. The active site involves R428.

Belongs to the peptidase M17 family. In terms of assembly, homohexamer (dimer of homotrimers). The cofactor is Mn(2+). In terms of tissue distribution, expressed constitutively at low levels. Expressed in vegetative and reproductive organs, including leaves, stems, roots, cotyledons (after imbibition), pistils, sepals, petals, stamens, and floral buds (at protein level). Present at very low levels in healthy leaves.

Its subcellular location is the plastid. It is found in the chloroplast. It catalyses the reaction Release of an N-terminal amino acid, Xaa-|-Yaa-, in which Xaa is preferably Leu, but may be other amino acids including Pro although not Arg or Lys, and Yaa may be Pro. Amino acid amides and methyl esters are also readily hydrolyzed, but rates on arylamides are exceedingly low.. The enzyme catalyses Release of N-terminal proline from a peptide.. In terms of biological role, catalyzes the removal of unsubstituted N-terminal amino acids from various peptides. When associated as homohexamer, catalyzes the proteolyzes of Xaa-Leu dipeptides. Possesses leucine aminopeptidase activity against the model substrate leucine-amido methyl coumarin. Presumably involved in the processing and regular turnover of intracellular proteins. Its function is as follows. Functions as a molecular chaperone to protect proteins from heat-induced damage. The protein is Neutral leucine aminopeptidase, chloroplastic of Solanum lycopersicum (Tomato).